The following is a 532-amino-acid chain: Small ribosomal subunit protein uS2cz (532 aa).

Positions 1-271 (METLEKNFKK…SPISSKEKKA (271 aa)) are N-terminal extension. 3 consecutive TRAM domains span residues 38 to 97 (ALQA…SILN), 127 to 186 (DFKV…KPIL), and 197 to 260 (NQMI…KILK).

The protein belongs to the universal ribosomal protein uS2 family.

Its subcellular location is the plastid. The protein resides in the chloroplast. The protein is Small ribosomal subunit protein uS2cz (rps2-1) of Tetradesmus obliquus (Green alga).